We begin with the raw amino-acid sequence, 240 residues long: 1-(5-phosphoribosyl)-5-[(5-phosphoribosylamino)methylideneamino] imidazole-4-carboxamide isomerase 2 (240 aa).

Asp8 functions as the Proton acceptor in the catalytic mechanism. Asp129 (proton donor) is an active-site residue.

It belongs to the HisA/HisF family.

The protein localises to the cytoplasm. The catalysed reaction is 1-(5-phospho-beta-D-ribosyl)-5-[(5-phospho-beta-D-ribosylamino)methylideneamino]imidazole-4-carboxamide = 5-[(5-phospho-1-deoxy-D-ribulos-1-ylimino)methylamino]-1-(5-phospho-beta-D-ribosyl)imidazole-4-carboxamide. It participates in amino-acid biosynthesis; L-histidine biosynthesis; L-histidine from 5-phospho-alpha-D-ribose 1-diphosphate: step 4/9. The polypeptide is 1-(5-phosphoribosyl)-5-[(5-phosphoribosylamino)methylideneamino] imidazole-4-carboxamide isomerase 2 (Ruegeria sp. (strain TM1040) (Silicibacter sp.)).